A 265-amino-acid polypeptide reads, in one-letter code: Phosphonates import ATP-binding protein PhnC (265 aa).

The region spanning 18-262 is the ABC transporter domain; it reads LVVEHLRKEY…HLKQIYGGEE (245 aa). 51–58 is a binding site for ATP; sequence GPSGTGKS.

This sequence belongs to the ABC transporter superfamily. Phosphonates importer (TC 3.A.1.9.1) family. As to quaternary structure, the complex is composed of two ATP-binding proteins (PhnC), two transmembrane proteins (PhnE) and a solute-binding protein (PhnD).

It localises to the cell inner membrane. It catalyses the reaction phosphonate(out) + ATP + H2O = phosphonate(in) + ADP + phosphate + H(+). Functionally, part of the ABC transporter complex PhnCDE involved in phosphonates import. Responsible for energy coupling to the transport system. The chain is Phosphonates import ATP-binding protein PhnC from Nitratidesulfovibrio vulgaris (strain ATCC 29579 / DSM 644 / CCUG 34227 / NCIMB 8303 / VKM B-1760 / Hildenborough) (Desulfovibrio vulgaris).